Here is a 105-residue protein sequence, read N- to C-terminus: UPF0235 protein RrIowa_1526 (105 aa).

The protein belongs to the UPF0235 family.

The protein is UPF0235 protein RrIowa_1526 of Rickettsia rickettsii (strain Iowa).